The chain runs to 296 residues: Diaminopimelate epimerase (296 aa).

Positions 17, 49, and 69 each coordinate substrate. The active-site Proton donor is the Cys-78. Substrate contacts are provided by residues 79–80 (GN), Asn-171, Asn-205, and 223–224 (ER). Residue Cys-232 is the Proton acceptor of the active site. Residue 233 to 234 (GT) coordinates substrate.

The protein belongs to the diaminopimelate epimerase family. As to quaternary structure, homodimer.

It localises to the cytoplasm. The catalysed reaction is (2S,6S)-2,6-diaminopimelate = meso-2,6-diaminopimelate. It participates in amino-acid biosynthesis; L-lysine biosynthesis via DAP pathway; DL-2,6-diaminopimelate from LL-2,6-diaminopimelate: step 1/1. In terms of biological role, catalyzes the stereoinversion of LL-2,6-diaminopimelate (L,L-DAP) to meso-diaminopimelate (meso-DAP), a precursor of L-lysine and an essential component of the bacterial peptidoglycan. The polypeptide is Diaminopimelate epimerase (Methylorubrum extorquens (strain CM4 / NCIMB 13688) (Methylobacterium extorquens)).